The following is a 376-amino-acid chain: Queuine tRNA-ribosyltransferase (376 aa).

The active-site Proton acceptor is aspartate 89. Substrate-binding positions include 89–93 (DSGGF), aspartate 143, glutamine 194, and glycine 221. The RNA binding stretch occupies residues 252 to 258 (GVGIPSN). The active-site Nucleophile is aspartate 271. The segment at 276–280 (ARNGR) is RNA binding; important for wobble base 34 recognition. The Zn(2+) site is built by cysteine 309, cysteine 311, cysteine 314, and histidine 340.

It belongs to the queuine tRNA-ribosyltransferase family. As to quaternary structure, homodimer. Within each dimer, one monomer is responsible for RNA recognition and catalysis, while the other monomer binds to the replacement base PreQ1. Zn(2+) serves as cofactor.

The catalysed reaction is 7-aminomethyl-7-carbaguanine + guanosine(34) in tRNA = 7-aminomethyl-7-carbaguanosine(34) in tRNA + guanine. It participates in tRNA modification; tRNA-queuosine biosynthesis. Its function is as follows. Catalyzes the base-exchange of a guanine (G) residue with the queuine precursor 7-aminomethyl-7-deazaguanine (PreQ1) at position 34 (anticodon wobble position) in tRNAs with GU(N) anticodons (tRNA-Asp, -Asn, -His and -Tyr). Catalysis occurs through a double-displacement mechanism. The nucleophile active site attacks the C1' of nucleotide 34 to detach the guanine base from the RNA, forming a covalent enzyme-RNA intermediate. The proton acceptor active site deprotonates the incoming PreQ1, allowing a nucleophilic attack on the C1' of the ribose to form the product. After dissociation, two additional enzymatic reactions on the tRNA convert PreQ1 to queuine (Q), resulting in the hypermodified nucleoside queuosine (7-(((4,5-cis-dihydroxy-2-cyclopenten-1-yl)amino)methyl)-7-deazaguanosine). This is Queuine tRNA-ribosyltransferase from Clostridium botulinum (strain Hall / ATCC 3502 / NCTC 13319 / Type A).